A 525-amino-acid chain; its full sequence is GMP synthase [glutamine-hydrolyzing] (525 aa).

The Glutamine amidotransferase type-1 domain maps to 8-207 (KILILDFGSQ…ALEICGCPAN (200 aa)). Cysteine 85 (nucleophile) is an active-site residue. Active-site residues include histidine 181 and glutamate 183. One can recognise a GMPS ATP-PPase domain in the interval 208 to 400 (WKPSSIIEDA…LGLPYDMLYR (193 aa)). Residue 235-241 (SGGVDSS) participates in ATP binding.

In terms of assembly, homodimer.

The enzyme catalyses XMP + L-glutamine + ATP + H2O = GMP + L-glutamate + AMP + diphosphate + 2 H(+). Its pathway is purine metabolism; GMP biosynthesis; GMP from XMP (L-Gln route): step 1/1. Functionally, catalyzes the synthesis of GMP from XMP. This chain is GMP synthase [glutamine-hydrolyzing], found in Shewanella pealeana (strain ATCC 700345 / ANG-SQ1).